The chain runs to 145 residues: Bacilliredoxin SERP1075 (145 aa).

The protein belongs to the bacilliredoxin family.

This Staphylococcus epidermidis (strain ATCC 35984 / DSM 28319 / BCRC 17069 / CCUG 31568 / BM 3577 / RP62A) protein is Bacilliredoxin SERP1075.